The chain runs to 210 residues: Large ribosomal subunit protein uL3 (210 aa).

The protein belongs to the universal ribosomal protein uL3 family. As to quaternary structure, part of the 50S ribosomal subunit. Forms a cluster with proteins L14 and L19.

Its function is as follows. One of the primary rRNA binding proteins, it binds directly near the 3'-end of the 23S rRNA, where it nucleates assembly of the 50S subunit. This is Large ribosomal subunit protein uL3 from Amoebophilus asiaticus (strain 5a2).